Consider the following 286-residue polypeptide: MDKLKIALQYIMPKHLLSRLVGKLAAAELGAVTTSVIKWFIKQYKIDMSEAAQSAPEAYASFNQFFTRALKPGIRPLCDDDDYIVHPVDGAVSQCGPIKEGRIFQAKGHEYSSLALLGDQADDAKRFEGGDFATIYLAPKDYHRIHMPIKGTLSKMTYVPGELFSVNPLTAENVPGLFARNERVVAIFETEIGPMAMVLVGATIVASIETVWAGTVTPPTGKKVFTWDYPTEGPEAITLDKGEEMGRFKLGSTVVMLFAKDALEHFADGVEPKAVTRMGQAFAKID.

Catalysis depends on charge relay system; for autoendoproteolytic cleavage activity residues D89, H146, and S252. S252 functions as the Schiff-base intermediate with substrate; via pyruvic acid; for decarboxylase activity in the catalytic mechanism. A Pyruvic acid (Ser); by autocatalysis modification is found at S252.

It belongs to the phosphatidylserine decarboxylase family. PSD-B subfamily. Prokaryotic type I sub-subfamily. As to quaternary structure, heterodimer of a large membrane-associated beta subunit and a small pyruvoyl-containing alpha subunit. It depends on pyruvate as a cofactor. In terms of processing, is synthesized initially as an inactive proenzyme. Formation of the active enzyme involves a self-maturation process in which the active site pyruvoyl group is generated from an internal serine residue via an autocatalytic post-translational modification. Two non-identical subunits are generated from the proenzyme in this reaction, and the pyruvate is formed at the N-terminus of the alpha chain, which is derived from the carboxyl end of the proenzyme. The autoendoproteolytic cleavage occurs by a canonical serine protease mechanism, in which the side chain hydroxyl group of the serine supplies its oxygen atom to form the C-terminus of the beta chain, while the remainder of the serine residue undergoes an oxidative deamination to produce ammonia and the pyruvoyl prosthetic group on the alpha chain. During this reaction, the Ser that is part of the protease active site of the proenzyme becomes the pyruvoyl prosthetic group, which constitutes an essential element of the active site of the mature decarboxylase.

The protein localises to the cell membrane. It catalyses the reaction a 1,2-diacyl-sn-glycero-3-phospho-L-serine + H(+) = a 1,2-diacyl-sn-glycero-3-phosphoethanolamine + CO2. The protein operates within phospholipid metabolism; phosphatidylethanolamine biosynthesis; phosphatidylethanolamine from CDP-diacylglycerol: step 2/2. Functionally, catalyzes the formation of phosphatidylethanolamine (PtdEtn) from phosphatidylserine (PtdSer). This Shewanella loihica (strain ATCC BAA-1088 / PV-4) protein is Phosphatidylserine decarboxylase proenzyme.